Reading from the N-terminus, the 559-residue chain is Dihydroxy-acid dehydratase (559 aa).

A [2Fe-2S] cluster-binding site is contributed by Cys52. Residue Asp84 participates in Mg(2+) binding. Position 125 (Cys125) interacts with [2Fe-2S] cluster. Residues Asp126 and Lys127 each coordinate Mg(2+). An N6-carboxylysine modification is found at Lys127. Cys197 lines the [2Fe-2S] cluster pocket. Glu447 provides a ligand contact to Mg(2+). Residue Ser473 is the Proton acceptor of the active site.

Belongs to the IlvD/Edd family. As to quaternary structure, homodimer. [2Fe-2S] cluster serves as cofactor. It depends on Mg(2+) as a cofactor.

It catalyses the reaction (2R)-2,3-dihydroxy-3-methylbutanoate = 3-methyl-2-oxobutanoate + H2O. It carries out the reaction (2R,3R)-2,3-dihydroxy-3-methylpentanoate = (S)-3-methyl-2-oxopentanoate + H2O. It participates in amino-acid biosynthesis; L-isoleucine biosynthesis; L-isoleucine from 2-oxobutanoate: step 3/4. It functions in the pathway amino-acid biosynthesis; L-valine biosynthesis; L-valine from pyruvate: step 3/4. Its function is as follows. Functions in the biosynthesis of branched-chain amino acids. Catalyzes the dehydration of (2R,3R)-2,3-dihydroxy-3-methylpentanoate (2,3-dihydroxy-3-methylvalerate) into 2-oxo-3-methylpentanoate (2-oxo-3-methylvalerate) and of (2R)-2,3-dihydroxy-3-methylbutanoate (2,3-dihydroxyisovalerate) into 2-oxo-3-methylbutanoate (2-oxoisovalerate), the penultimate precursor to L-isoleucine and L-valine, respectively. This Roseiflexus castenholzii (strain DSM 13941 / HLO8) protein is Dihydroxy-acid dehydratase.